The chain runs to 264 residues: Small ribosomal subunit protein eS1 (264 aa).

At K34 the chain carries N6-acetyllysine; alternate. Residue K34 forms a Glycyl lysine isopeptide (Lys-Gly) (interchain with G-Cter in SUMO2); alternate linkage. K56 carries the post-translational modification N6-acetyllysine. Y155 bears the ADP-ribosyltyrosine mark. The interval 232–264 is disordered; it reads HGEGSSSGKATGDETGAKVERADGYEPPVQESV. Phosphoserine is present on residues S236 and S237. Positions 242–255 are enriched in basic and acidic residues; sequence TGDETGAKVERADG. K249 is modified (N6-acetyllysine; alternate). K249 participates in a covalent cross-link: Glycyl lysine isopeptide (Lys-Gly) (interchain with G-Cter in SUMO2); alternate. Y256 is subject to Phosphotyrosine. A Phosphoserine modification is found at S263.

It belongs to the eukaryotic ribosomal protein eS1 family. In terms of assembly, component of the small ribosomal subunit. Mature ribosomes consist of a small (40S) and a large (60S) subunit. The 40S subunit contains about 33 different proteins and 1 molecule of RNA (18S). The 60S subunit contains about 49 different proteins and 3 molecules of RNA (28S, 5.8S and 5S). Identified in a IGF2BP1-dependent mRNP granule complex containing untranslated mRNAs. Binds with high affinity to IPO4. Interacts with DDIT3. Part of the small subunit (SSU) processome, composed of more than 70 proteins and the RNA chaperone small nucleolar RNA (snoRNA) U3. ADP-ribosylated at Tyr-155 by PARP1 in presence of HPF1.

The protein resides in the cytoplasm. It localises to the nucleus. It is found in the nucleolus. Its function is as follows. Component of the small ribosomal subunit. The ribosome is a large ribonucleoprotein complex responsible for the synthesis of proteins in the cell. Part of the small subunit (SSU) processome, first precursor of the small eukaryotic ribosomal subunit. During the assembly of the SSU processome in the nucleolus, many ribosome biogenesis factors, an RNA chaperone and ribosomal proteins associate with the nascent pre-rRNA and work in concert to generate RNA folding, modifications, rearrangements and cleavage as well as targeted degradation of pre-ribosomal RNA by the RNA exosome. May play a role during erythropoiesis through regulation of transcription factor DDIT3. The sequence is that of Small ribosomal subunit protein eS1 from Bos taurus (Bovine).